Consider the following 347-residue polypeptide: UDP-3-O-acylglucosamine N-acyltransferase (347 aa).

His-240 acts as the Proton acceptor in catalysis.

This sequence belongs to the transferase hexapeptide repeat family. LpxD subfamily. As to quaternary structure, homotrimer.

It carries out the reaction a UDP-3-O-[(3R)-3-hydroxyacyl]-alpha-D-glucosamine + a (3R)-hydroxyacyl-[ACP] = a UDP-2-N,3-O-bis[(3R)-3-hydroxyacyl]-alpha-D-glucosamine + holo-[ACP] + H(+). It functions in the pathway bacterial outer membrane biogenesis; LPS lipid A biosynthesis. In terms of biological role, catalyzes the N-acylation of UDP-3-O-acylglucosamine using 3-hydroxyacyl-ACP as the acyl donor. Is involved in the biosynthesis of lipid A, a phosphorylated glycolipid that anchors the lipopolysaccharide to the outer membrane of the cell. This is UDP-3-O-acylglucosamine N-acyltransferase from Hydrogenovibrio crunogenus (strain DSM 25203 / XCL-2) (Thiomicrospira crunogena).